A 538-amino-acid chain; its full sequence is Prickle planar cell polarity protein 3-A (538 aa).

Residues 66–175 (SGSQRDSLCE…CVRPVSGTMS (110 aa)) enclose the PET domain. LIM zinc-binding domains are found at residues 177 to 241 (TVCQ…ELKR), 242 to 302 (PRCL…LYAQ), and 305 to 366 (DSCG…NATP). Polar residues predominate over residues 369–378 (SFSPSQTDLS). Disordered stretches follow at residues 369 to 398 (SFSP…DGDS), 433 to 463 (RGAP…TRVT), and 475 to 538 (SVSL…CLLS). Basic and acidic residues predominate over residues 435–449 (APKEFSRECPNRRSL). Residues 451–463 (DLNSHTRTPTRVT) show a composition bias toward polar residues. Composition is skewed to low complexity over residues 475 to 488 (SVSL…SSSS) and 514 to 523 (APPTHAPTST).

It belongs to the prickle / espinas / testin family. In terms of assembly, interacts with vangl2 via its C-terminus. The vangl2-dependent membrane recruitment of prickle3 is a prerequisite for its polarization. Interacts with wtip. Wtip is involved in the recruitment of prickle3 to the basal body. As to expression, predominantly expressed in the epidermal ectoderm.

Its subcellular location is the cytoplasm. The protein resides in the cell membrane. It is found in the mitochondrion. Its function is as follows. Involved in the planar cell polarity (PCP) pathway that is essential for the polarization of epithelial cells during morphogenetic processes, including gastrulation and neurulation. PCP is maintained by two molecular modules, the global and the core modules. Proteins of the core module include the proteins Frizzled (Fz), Disheveled (Dsh), Van Gogh (Vang), Prickle (Pk), Flamingo (Fmi, Celsr) and Diego (Dgo). The core module proteins develop subcellular asymmetry, accumulating in two groups on opposite sides of epithelial cells. Distinct proximal (Vang, Pk and Fmi) and distal (Fz, Dsh, Dgo and Fmi) complexes segregate to opposite sides of the cell, where they interact with the opposite complex in the neighboring cell at or near the adherents junctions. Directional information to orient polarization with respect to the tissue axes is provided by the global module which involves Wnt proteins. Involved in the organization of the basal body. Involved in cilia growth and positioning. Required for proper assembly, stability, and function of mitochondrial membrane ATP synthase (mitochondrial complex V). In Xenopus laevis (African clawed frog), this protein is Prickle planar cell polarity protein 3-A (prickle3-a).